The chain runs to 32 residues: Photosystem I reaction center subunit XII (32 aa).

A helical membrane pass occupies residues 9–31 (VYVALVSALITSFLAVRLGLALY).

The protein belongs to the PsaM family.

The protein resides in the plastid. It localises to the chloroplast thylakoid membrane. The sequence is that of Photosystem I reaction center subunit XII from Chaetosphaeridium globosum (Charophycean green alga).